We begin with the raw amino-acid sequence, 756 residues long: Conserved oligomeric Golgi complex subunit 2 (756 aa).

A coiled-coil region spans residues 62–82 (RSELRSHLASLNRELVDLINR). The tract at residues 173–199 (WQNEDANSMGRSSMNDENSTQQDGTTM) is disordered.

The protein belongs to the COG2 family. Homodimer. Component of the conserved oligomeric Golgi complex which is composed of eight different subunits and is required for normal Golgi morphology and localization. Binds to COG3 and COG4. Interacts with FPP3/VETH1 and FPP2/VETH2; this interaction promotes the association between cortical microtubules and EXO70A1. Binds to SEC15B, and, possibly, with EXO70A1, SEC3A and SEC10A.

It localises to the golgi apparatus membrane. Required for normal Golgi morphology and function. Ensures, when in complex with FPP3/VETH1 and FPP2/VETH2, the correct secondary cell wall (SCW) deposition pattern by recruiting exocyst components to cortical microtubules in xylem cells during secondary cell wall deposition. The protein is Conserved oligomeric Golgi complex subunit 2 of Arabidopsis thaliana (Mouse-ear cress).